The sequence spans 322 residues: (12E)-labda-8(17),12,14-triene synthase (322 aa).

Over residues 1–11 (MNDATRTSTTP) the composition is skewed to polar residues. The tract at residues 1-26 (MNDATRTSTTPPALPMPDLRDSFPGP) is disordered. Residues aspartate 93 and glutamate 98 each coordinate Mg(2+). A DDXXXE motif motif is present at residues 93-98 (DDAHGE). Residue arginine 188 participates in substrate binding. Positions 234 and 238 each coordinate Mg(2+). Positions 234-242 (NDLASYAKE) match the NXXXSXXXE motif motif. Residue lysine 241 participates in substrate binding. A Mg(2+)-binding site is contributed by glutamate 242. Position 319 to 320 (319 to 320 (RY)) interacts with substrate.

The protein belongs to the terpene synthase family. It depends on Mg(2+) as a cofactor.

The enzyme catalyses (+)-copalyl diphosphate = (12E)-labda-8(17),12,14-triene + diphosphate. Involved in the biosynthesis of the labdane-type bicyclic diterpene labda-8(17),12(E),14-triene. Catalyzes the conversion of (+)-copalyl diphosphate to yield labda-8(17),12(E),14-triene. In Streptomyces anulatus (Streptomyces chrysomallus), this protein is (12E)-labda-8(17),12,14-triene synthase.